The following is a 165-amino-acid chain: MNGRKDEELKDLTLLGNQGTTYSFTYDPNLLEVFDNKHPDRDYFVKFNCPEFTSLCPKTRQPDFATIYISYIPDKKCVESKSLKLYLFSFRNHGDFHEDCVNIIMNDLINVMEPRYIEVWGKFTPRGGISIDPYCNWGRPGTKYEKMAEYRLLNHDLYPEKIDNR.

Cys-56 (thioimide intermediate) is an active-site residue. Asp-63 functions as the Proton donor in the catalytic mechanism. Residues 78–80 (VES) and 97–98 (HE) each bind substrate.

This sequence belongs to the GTP cyclohydrolase I family. QueF type 1 subfamily.

The protein localises to the cytoplasm. The catalysed reaction is 7-aminomethyl-7-carbaguanine + 2 NADP(+) = 7-cyano-7-deazaguanine + 2 NADPH + 3 H(+). It participates in tRNA modification; tRNA-queuosine biosynthesis. Its function is as follows. Catalyzes the NADPH-dependent reduction of 7-cyano-7-deazaguanine (preQ0) to 7-aminomethyl-7-deazaguanine (preQ1). The sequence is that of NADPH-dependent 7-cyano-7-deazaguanine reductase from Geobacillus thermodenitrificans (strain NG80-2).